A 299-amino-acid chain; its full sequence is Delta-9 desaturase-like 3 protein (299 aa).

2 helical membrane-spanning segments follow: residues Ala-38 to Ala-57 and Phe-58 to Tyr-76. Residues His-77–His-82 carry the Histidine box-1 motif. The short motif at His-114–His-118 is the Histidine box-2 element. A run of 2 helical transmembrane segments spans residues Ile-174 to Leu-194 and Val-198 to Ile-218. Residues His-246–His-250 carry the Histidine box-3 motif. A helical transmembrane segment spans residues Trp-262–Thr-282.

It belongs to the fatty acid desaturase type 1 family. Fe cation serves as cofactor.

The protein localises to the endoplasmic reticulum membrane. Its pathway is lipid metabolism; polyunsaturated fatty acid biosynthesis. The chain is Delta-9 desaturase-like 3 protein from Arabidopsis thaliana (Mouse-ear cress).